Here is a 291-residue protein sequence, read N- to C-terminus: Urease accessory protein UreD (291 aa).

The protein belongs to the UreD family. In terms of assembly, ureD, UreF and UreG form a complex that acts as a GTP-hydrolysis-dependent molecular chaperone, activating the urease apoprotein by helping to assemble the nickel containing metallocenter of UreC. The UreE protein probably delivers the nickel.

The protein resides in the cytoplasm. Required for maturation of urease via the functional incorporation of the urease nickel metallocenter. This is Urease accessory protein UreD from Acinetobacter baumannii (strain SDF).